The chain runs to 154 residues: Host transcription reprogramming factor 5 (154 aa).

Positions 1–19 are cleaved as a signal peptide; that stretch reads MQILRIAQLMALLATCASA. A disordered region spans residues 24–85; that stretch reads TGSRVYSRDV…KRIKAEQNAR (62 aa). Over residues 35-50 the composition is skewed to polar residues; sequence QTQGGFSGSPTTNSPD. Basic and acidic residues predominate over residues 69-85; the sequence is ETEKERKKRIKAEQNAR. The C2H2-type; degenerate zinc finger occupies 96–121; it reads YQCPYCSDPTVFSHSDALGRHIYTIH.

It localises to the secreted. Its subcellular location is the host nucleus. In terms of biological role, probable secreted effector that translocates into the nuclei of host cells to reprogram the expression of targeted genes by binding on effector binding elements in rice. This is Host transcription reprogramming factor 5 from Pyricularia oryzae (strain 70-15 / ATCC MYA-4617 / FGSC 8958) (Rice blast fungus).